We begin with the raw amino-acid sequence, 396 residues long: L-lactate dehydrogenase (396 aa).

Positions 1 to 380 (MIISAASDYR…SGDSLVQELG (380 aa)) constitute an FMN hydroxy acid dehydrogenase domain. Residue Tyr24 participates in substrate binding. The FMN site is built by Ser106 and Gln127. Position 129 (Tyr129) interacts with substrate. Thr155 contributes to the FMN binding site. Arg164 is a binding site for substrate. Lys251 is a binding site for FMN. The active-site Proton acceptor is the His275. Arg278 is a substrate binding site. Residue 306–330 (DSGIRNGLDVVRMIALGADTVLLGR) participates in FMN binding.

This sequence belongs to the FMN-dependent alpha-hydroxy acid dehydrogenase family. Requires FMN as cofactor.

The protein resides in the cell inner membrane. It catalyses the reaction (S)-lactate + A = pyruvate + AH2. Catalyzes the conversion of L-lactate to pyruvate. Is coupled to the respiratory chain. The chain is L-lactate dehydrogenase from Salmonella enteritidis PT4 (strain P125109).